A 239-amino-acid polypeptide reads, in one-letter code: Large ribosomal subunit protein uL1 (239 aa).

The protein belongs to the universal ribosomal protein uL1 family. In terms of assembly, part of the 50S ribosomal subunit.

Binds directly to 23S rRNA. The L1 stalk is quite mobile in the ribosome, and is involved in E site tRNA release. In terms of biological role, protein L1 is also a translational repressor protein, it controls the translation of the L11 operon by binding to its mRNA. This chain is Large ribosomal subunit protein uL1, found in Rickettsia akari (strain Hartford).